The sequence spans 119 residues: Protein TusC (119 aa).

It belongs to the DsrF/TusC family. As to quaternary structure, heterohexamer, formed by a dimer of trimers. The hexameric TusBCD complex contains 2 copies each of TusB, TusC and TusD. The TusBCD complex interacts with TusE.

It localises to the cytoplasm. Its function is as follows. Part of a sulfur-relay system required for 2-thiolation of 5-methylaminomethyl-2-thiouridine (mnm(5)s(2)U) at tRNA wobble positions. The polypeptide is Protein TusC (Citrobacter koseri (strain ATCC BAA-895 / CDC 4225-83 / SGSC4696)).